The primary structure comprises 116 residues: NADPH-dependent 7-cyano-7-deazaguanine reductase (116 aa).

The active-site Thioimide intermediate is C31. D38 acts as the Proton donor in catalysis. Residues 53 to 55 and 72 to 73 contribute to the substrate site; these read VEL and YE.

The protein belongs to the GTP cyclohydrolase I family. QueF type 1 subfamily.

It localises to the cytoplasm. It carries out the reaction 7-aminomethyl-7-carbaguanine + 2 NADP(+) = 7-cyano-7-deazaguanine + 2 NADPH + 3 H(+). It participates in tRNA modification; tRNA-queuosine biosynthesis. Its function is as follows. Catalyzes the NADPH-dependent reduction of 7-cyano-7-deazaguanine (preQ0) to 7-aminomethyl-7-deazaguanine (preQ1). The sequence is that of NADPH-dependent 7-cyano-7-deazaguanine reductase from Chloroherpeton thalassium (strain ATCC 35110 / GB-78).